We begin with the raw amino-acid sequence, 1027 residues long: Protein translocase subunit SecA (1027 aa).

ATP contacts are provided by residues glutamine 143, 161–165, and aspartate 661; that span reads GEGKT. The disordered stretch occupies residues 981–1027; the sequence is EESGTSNADNAGDNGPQTVIAEKKPGRNDLCPCGSGKKYKNCHGQQP. Zn(2+)-binding residues include cysteine 1011, cysteine 1013, cysteine 1022, and histidine 1023.

This sequence belongs to the SecA family. In terms of assembly, monomer and homodimer. Part of the essential Sec protein translocation apparatus which comprises SecA, SecYEG and auxiliary proteins SecDF. Other proteins may also be involved. The cofactor is Zn(2+).

It is found in the cell inner membrane. The protein resides in the cytoplasm. It carries out the reaction ATP + H2O + cellular proteinSide 1 = ADP + phosphate + cellular proteinSide 2.. Functionally, part of the Sec protein translocase complex. Interacts with the SecYEG preprotein conducting channel. Has a central role in coupling the hydrolysis of ATP to the transfer of proteins into and across the cell membrane, serving as an ATP-driven molecular motor driving the stepwise translocation of polypeptide chains across the membrane. This Chlorobium limicola (strain DSM 245 / NBRC 103803 / 6330) protein is Protein translocase subunit SecA.